The primary structure comprises 426 residues: Enolase (426 aa).

A (2R)-2-phosphoglycerate-binding site is contributed by Q165. Residue E209 is the Proton donor of the active site. Mg(2+) is bound by residues D244, E287, and D313. Residues K338, R367, S368, and K389 each coordinate (2R)-2-phosphoglycerate. K338 serves as the catalytic Proton acceptor.

The protein belongs to the enolase family. It depends on Mg(2+) as a cofactor.

It is found in the cytoplasm. It localises to the secreted. The protein localises to the cell surface. The catalysed reaction is (2R)-2-phosphoglycerate = phosphoenolpyruvate + H2O. It participates in carbohydrate degradation; glycolysis; pyruvate from D-glyceraldehyde 3-phosphate: step 4/5. Catalyzes the reversible conversion of 2-phosphoglycerate (2-PG) into phosphoenolpyruvate (PEP). It is essential for the degradation of carbohydrates via glycolysis. The polypeptide is Enolase (Methanococcus maripaludis (strain C7 / ATCC BAA-1331)).